We begin with the raw amino-acid sequence, 2283 residues long: MSKRQKAFHDSLANEKTRVRLYKSGKNWVKSGIKEIEMFKIMGLPFISHRIVSQDNQSISKKMTGYGLKTTAVIGGAFTVNMLHDQQAFAASDAPLTSELNTQSETVGNQNSTTIEASTSTADSTSVTKNSSSVQTSNSDTVSSEKSENVTSTTNSTSNQQEKLTSTSESTSSKNTTSSSDTKSVASTSSTEQPINTSTNQSTASNNTSQSTTPSSANLNKTSTTSTSTAPVKLRTFSRLAMSTFASAATTTAVTANTITVNKDNLKQYMTASGNATYDQSTGIVTLTQDAYSQKGAITLGTRIDSNKSFHFSGKVNLGNKYEGHGNGGDGIGFAFSPGVLGETGLNGAAVGIGGLSNAFGFKLDTYHNTSTPNASAKAKADPSSVAGGGAFGAFVTTDSYGVASTYTSSSAADNAAKLNVQPTNNAFQDFDINYNGDTKVMTVTYAGQTWTRNISDWIAKSGTTNFSLSMTASTGGATNLQQVQFGTFEYTESAVTQVRYVDVTTGKDIIPPKTYSGNVDQVVTIDNQQSALTAKGYNYTSVDSSYASTYNDTNKTVKMTNAGQSVTYYFTDVKAPTVTVGNQTIEVGKTMNPIVLTTTDNGTGTVTNTVTGLPSGLSYDSATNSIIGTPTKIGQSTVTVVSTDQANNKSTTTFTINVVDTTAPTVTPIGDQSSEVYSPISPIKIATQDNSGNAVTNKSTGLPSGLTFDSTNNTISGTPTNIGTSTITIVSTDASGNKTTTTFKYEVTRNSMSDSVSTSGSTQQSQSVSTSKADSQSASTSTSGSIVVSTSASTSKSTSVSLSDSVSASKSLSTSESNSVSSSTSTSLVNSQSVSSSMSDSASKSTSLSDSISNSSSTEKSESLSTSTSDSLRTSTSLSDSLSMSTSGSLSKSQSLSTSTSDSASTSQSVSDSTSNSISTAESLSESASTSDSISISNSIANSQSASTSKSDSQSTSISLSTSDSKSMSTSESLSDSTSTSDSVSGSLSVAGSQSVSTSTSDSMSTSEIVSDSISTSGSLSASDSKSMSVSSSMSTSQSGSTSESLSDSQSTSDSDSKSLSLSTSQSGSTSTSTSTSSSVRTSESQSTSGSMSTSQSDSTSISTSFSDPTSDSKSASTASSESISQSVSTSTSGSVSTSTSLSTSNSERTSTSMSDSTSLSTSESDSTSDSTSTSDSISEAISGSESTSISLSESNSTGDSESKSASAFLSESLSESTSESTSESLSGSTSDSTSLSDSNSESGSTSTSLSNSTSGSTSISTSTSGSASTSTVKSESVSTSLSTSTSTSLSDSTSLSTSLSDSTSGSKSNSLSASMSTSDSISTRKSESLSASTSLSGSTSESESGSTSSSASQSDSTSMSLSMSQSISGSTSTSTSTSLSDSTSTSLSLSASMNQSGVDSNSASQSASTSTSISTSESDSQSTSTYTSQSTSQSESTSTSTSISDSTSISKSTSQSGSTSTSASLSGSESESDSQSVSTSASESTSESASTSLSDSTSTSNSTSESTSNAISTSASASESDSSSTSLSDSTSASMQSSESDSQSTSTSLSNSQSTSTSIRMSTIVSESVSESTSESGSTSESTSESDSTSTSLSDSQSTSRSTSASGSASTSTSTSDSRSTSAPTSTSMRTSTLDSQSMSLSTSTSTSVSDSTSLSDSVSDSTSDSTSTSTSGSMSASISLSDSTSTSTSASEVMSASISDSQSMSESVNDSESVSESNSESDSKSMSGSTSVSDSGSLSVSTSLRKSESVSESSSLSGSQSMSDSVSTSDSSSLSVSMSLRSSESVSESDSLSDSKSTSGSTSTSTSGSLSTSLSGSESVSESTSLSDSISMSDSTSTSDSDSLSGSISLSGSTSLSTSDSLSDSKSLSSSQSMSGSESTSTSVSDSQSSSASNSQFDSMSISASESDSVSTSDSSSISGSNSTSTSLSTSDSMSGSVSVSTSTSLSDSISGSISVSDSSSTSTSESLSDSMAQSQSTSTSASGSLSTSISTSMSMSASTSTSQSTSVSTSLSTSDSISDSTSISISGSQSAVESESTSDSTSISDSESLSTSDSDSTSTSTSVSTSGSTSTSVSESLSTSGSGSTSVSDSTSMSESDSTSASMSQDKSDSTSISNSESVSTSTSTSLSTSDSTSTSESLSTSMSGSQSISDSTSTSMSNSTSMSNSTSTSMSGSTSTSESNSMHPSDSMSMHHTHSTSTSISTSEATTSTSDSQSTLSATSEATKHNGTRAQSEERLPDTGESIKQNGLLGGIMTLLVGLGLMKRKKKKDENDQDDSQA.

The N-terminal stretch at 1–89 (MSKRQKAFHD…VNMLHDQQAF (89 aa)) is a signal peptide. Residues 90 to 230 (AASDAPLTSE…KTSTTSTSTA (141 aa)) form a serine-rich repeat region 1, SRR1 region. The segment covering 100–111 (LNTQSETVGNQN) has biased composition (polar residues). Disordered regions lie at residues 100-230 (LNTQ…TSTA), 691-721 (NSGNAVTNKSTGLPSGLTFDSTNNTISGTPT), and 751-2255 (NSMS…GLLG). Residues 112–128 (STTIEASTSTADSTSVT) are compositionally biased toward low complexity. Residues 129–140 (KNSSSVQTSNSD) show a composition bias toward polar residues. Positions 149–229 (NVTSTTNSTS…NKTSTTSTST (81 aa)) are enriched in low complexity. The interval 231-751 (PVKLRTFSRL…TTFKYEVTRN (521 aa)) is non-repeat region (NRR). Low complexity-rich tracts occupy residues 752–1323 (SMSD…SDSI), 1330–1894 (SLSA…QSSS), and 1901–2225 (DSMS…SATS). Residues 752 to 2244 (SMSDSVSTSG…AQSEERLPDT (1493 aa)) are serine-rich repeat region 2, SRR2. The LPXTG sorting signal motif lies at 2241–2245 (LPDTG). Thr2244 carries the pentaglycyl murein peptidoglycan amidated threonine modification. Residues 2245 to 2283 (GESIKQNGLLGGIMTLLVGLGLMKRKKKKDENDQDDSQA) constitute a propeptide, removed by sortase.

It belongs to the serine-rich repeat protein (SRRP) family. Post-translationally, proteolytically cleaved by a metalloprotease. Glycosylated. It is probable that most of the Ser residues in SSR1 and SSR2 are O-GlcNAcylated. Sequential glycosylation by sugar transferases are able to generate complex sugar polymorphisms.

It is found in the secreted. The protein localises to the cell wall. In terms of biological role, mediates binding to human platelets, possibly through a receptor-ligand interaction. Probably associated with virulence in endovascular infection. The chain is Serine-rich adhesin for platelets (sraP) from Staphylococcus aureus.